A 160-amino-acid polypeptide reads, in one-letter code: 6,7-dimethyl-8-ribityllumazine synthase (160 aa).

5-amino-6-(D-ribitylamino)uracil contacts are provided by residues tryptophan 27, 59-61 (AIE), and 81-83 (VVI). (2S)-2-hydroxy-3-oxobutyl phosphate is bound at residue 86-87 (QT). Histidine 89 (proton donor) is an active-site residue. Asparagine 114 is a binding site for 5-amino-6-(D-ribitylamino)uracil. Arginine 128 provides a ligand contact to (2S)-2-hydroxy-3-oxobutyl phosphate.

The protein belongs to the DMRL synthase family. Homopentamer.

The catalysed reaction is (2S)-2-hydroxy-3-oxobutyl phosphate + 5-amino-6-(D-ribitylamino)uracil = 6,7-dimethyl-8-(1-D-ribityl)lumazine + phosphate + 2 H2O + H(+). It participates in cofactor biosynthesis; riboflavin biosynthesis; riboflavin from 2-hydroxy-3-oxobutyl phosphate and 5-amino-6-(D-ribitylamino)uracil: step 1/2. Catalyzes the formation of 6,7-dimethyl-8-ribityllumazine by condensation of 5-amino-6-(D-ribitylamino)uracil with 3,4-dihydroxy-2-butanone 4-phosphate. This is the penultimate step in the biosynthesis of riboflavin. The protein is 6,7-dimethyl-8-ribityllumazine synthase of Mycolicibacterium paratuberculosis (strain ATCC BAA-968 / K-10) (Mycobacterium paratuberculosis).